The primary structure comprises 77 residues: Acyl carrier protein (77 aa).

The Carrier domain maps to 2–77 (ADTLSRITKI…DVVEYIEGRQ (76 aa)). The residue at position 37 (serine 37) is an O-(pantetheine 4'-phosphoryl)serine.

It belongs to the acyl carrier protein (ACP) family. 4'-phosphopantetheine is transferred from CoA to a specific serine of apo-ACP by AcpS. This modification is essential for activity because fatty acids are bound in thioester linkage to the sulfhydryl of the prosthetic group.

The protein resides in the cytoplasm. The protein operates within lipid metabolism; fatty acid biosynthesis. In terms of biological role, carrier of the growing fatty acid chain in fatty acid biosynthesis. This chain is Acyl carrier protein, found in Halalkalibacterium halodurans (strain ATCC BAA-125 / DSM 18197 / FERM 7344 / JCM 9153 / C-125) (Bacillus halodurans).